Reading from the N-terminus, the 335-residue chain is Erlin-2-A (335 aa).

The Cytoplasmic portion of the chain corresponds to 1–2 (MS). The chain crosses the membrane as a helical span at residues 3 to 23 (HAGAIVGLGVALIAAALFSAI). At 24 to 335 (HKIEEGHVGV…GLDEAASAEE (312 aa)) the chain is on the lumenal side. The N-linked (GlcNAc...) asparagine glycan is linked to Asn-106.

This sequence belongs to the band 7/mec-2 family.

It is found in the endoplasmic reticulum membrane. Mediates the endoplasmic reticulum-associated degradation (ERAD) of inositol 1,4,5-trisphosphate receptors (IP3Rs). Promotes sterol-accelerated ERAD of HMGCR. Involved in regulation of cellular cholesterol homeostasis by regulation the SREBP signaling pathway. The polypeptide is Erlin-2-A (erlin2-a) (Xenopus laevis (African clawed frog)).